A 101-amino-acid polypeptide reads, in one-letter code: Trp operon repressor homolog (101 aa).

The DNA-binding element occupies 59–82 (QREIAQKYGVSIAQITRGSNALKA).

It belongs to the TrpR family. As to quaternary structure, homodimer.

The protein localises to the cytoplasm. In terms of biological role, this protein is an aporepressor. When complexed with L-tryptophan it binds the operator region of the trp operon and prevents the initiation of transcription. This Chlamydia caviae (strain ATCC VR-813 / DSM 19441 / 03DC25 / GPIC) (Chlamydophila caviae) protein is Trp operon repressor homolog.